A 205-amino-acid chain; its full sequence is Putative 3-methyladenine DNA glycosylase (205 aa).

The protein belongs to the DNA glycosylase MPG family.

This chain is Putative 3-methyladenine DNA glycosylase, found in Clostridium perfringens (strain SM101 / Type A).